Reading from the N-terminus, the 165-residue chain is MTLSKNSHKEDQLEEKVLVVNRCSKVVKGGRKFSFSALILVGDGKGRLGYGFAKANELTDAIRKGGEAARKNLITIESLESGSIPHEVLVDQDGAQLLLKPAKSGTGIVAGSRIRLILEMAGVKNIVAKSLGSNNPMNQVKAAFKALLSLSSRKDVLQRRRVTHD.

The S5 DRBM domain occupies L13–I76.

The protein belongs to the universal ribosomal protein uS5 family. In terms of assembly, part of the 30S ribosomal subunit. Contacts proteins S4 and S8.

With S4 and S12 plays an important role in translational accuracy. In terms of biological role, located at the back of the 30S subunit body where it stabilizes the conformation of the head with respect to the body. The polypeptide is Small ribosomal subunit protein uS5 (Chlamydia caviae (strain ATCC VR-813 / DSM 19441 / 03DC25 / GPIC) (Chlamydophila caviae)).